Reading from the N-terminus, the 299-residue chain is tRNA dimethylallyltransferase (299 aa).

An ATP-binding site is contributed by Gly-11–Ser-18. A substrate-binding site is contributed by Thr-13–Ser-18.

Belongs to the IPP transferase family. As to quaternary structure, monomer. Mg(2+) is required as a cofactor.

It carries out the reaction adenosine(37) in tRNA + dimethylallyl diphosphate = N(6)-dimethylallyladenosine(37) in tRNA + diphosphate. Functionally, catalyzes the transfer of a dimethylallyl group onto the adenine at position 37 in tRNAs that read codons beginning with uridine, leading to the formation of N6-(dimethylallyl)adenosine (i(6)A). The chain is tRNA dimethylallyltransferase from Pseudarthrobacter chlorophenolicus (strain ATCC 700700 / DSM 12829 / CIP 107037 / JCM 12360 / KCTC 9906 / NCIMB 13794 / A6) (Arthrobacter chlorophenolicus).